The following is a 103-amino-acid chain: Major carboxysome shell protein CsoS1 (103 aa).

The BMC domain maps to 9–94 (ALGMIETRGL…PHREVEPALG (86 aa)).

This sequence belongs to the bacterial microcompartments protein family. CsoS1 subfamily. Homohexamer with a small central pore. A CsoS1-CsoS1D-CsoS2 complex can be isolated following expression in E.coli. Forms a CsoS2-CsoS1-RuBisCO complex.

It is found in the carboxysome. Functionally, the major shell protein of the carboxysome, a polyhedral inclusion where RuBisCO (ribulose bisphosphate carboxylase, ccbL-ccbS) is sequestered. Assembles into hexamers which make sheets that form the facets of the polyhedral carboxysome. There are estimated to be 538 CsoS1 hexamers per carboxysome; note this number includes the probable carboxysome shell vertex proteins CsoS4A and CsoS4B. This Prochlorococcus marinus subsp. pastoris (strain CCMP1986 / NIES-2087 / MED4) protein is Major carboxysome shell protein CsoS1.